We begin with the raw amino-acid sequence, 409 residues long: Elongation factor Tu, chloroplastic (409 aa).

The tr-type G domain maps to 10 to 214 (KPHVNIGTIG…AVDEYIPTPE (205 aa)). The tract at residues 19–26 (GHVDHGKT) is G1. Residue 19 to 26 (GHVDHGKT) participates in GTP binding. T26 serves as a coordination point for Mg(2+). The G2 stretch occupies residues 60 to 64 (GITIN). The interval 81-84 (DCPG) is G3. GTP is bound by residues 81–85 (DCPGH) and 136–139 (NKED). A G4 region spans residues 136–139 (NKED). The tract at residues 174-176 (SAL) is G5.

The protein belongs to the TRAFAC class translation factor GTPase superfamily. Classic translation factor GTPase family. EF-Tu/EF-1A subfamily.

The protein localises to the plastid. The protein resides in the chloroplast. It catalyses the reaction GTP + H2O = GDP + phosphate + H(+). In terms of biological role, GTP hydrolase that promotes the GTP-dependent binding of aminoacyl-tRNA to the A-site of ribosomes during protein biosynthesis. This Trieres chinensis (Marine centric diatom) protein is Elongation factor Tu, chloroplastic (tufA).